The chain runs to 112 residues: Putative pterin-4-alpha-carbinolamine dehydratase (112 aa).

The protein belongs to the pterin-4-alpha-carbinolamine dehydratase family.

The catalysed reaction is (4aS,6R)-4a-hydroxy-L-erythro-5,6,7,8-tetrahydrobiopterin = (6R)-L-erythro-6,7-dihydrobiopterin + H2O. The protein is Putative pterin-4-alpha-carbinolamine dehydratase of Shewanella woodyi (strain ATCC 51908 / MS32).